The primary structure comprises 447 residues: Serine/threonine-protein phosphatase 2A 55 kDa regulatory subunit B gamma isoform (447 aa).

WD repeat units lie at residues 22 to 61, 87 to 128, 171 to 209, 220 to 260, 279 to 317, 334 to 375, and 410 to 446; these read TEAD…KNAP, EIEE…KRPE, GHTY…RSFN, DLTE…LCDK, EIIS…RPIE, ENDC…DVTL, and DFTK…NSDM.

This sequence belongs to the phosphatase 2A regulatory subunit B family. In terms of assembly, PP2A consists of a common heterodimeric core enzyme, composed of a 36 kDa catalytic subunit (subunit C) and a 65 kDa constant regulatory subunit (PR65 or subunit A), that associates with a variety of regulatory subunits. Proteins that associate with the core dimer include three families of regulatory subunits B (the R2/B/PR55/B55, R3/B''/PR72/PR130/PR59 and R5/B'/B56 families), the 48 kDa variable regulatory subunit, viral proteins, and cell signaling molecules. Interacts with IER5.

The B regulatory subunit might modulate substrate selectivity and catalytic activity, and might also direct the localization of the catalytic enzyme to a particular subcellular compartment. The chain is Serine/threonine-protein phosphatase 2A 55 kDa regulatory subunit B gamma isoform (PPP2R2C) from Homo sapiens (Human).